Reading from the N-terminus, the 436-residue chain is MLLGVILSIPRLVLFLPGVPVTSTLPSQPKDADLAVSARPSAQGRFGRYGGQYVPETLMPALAELEQAAALAWKDPAFTAELDRLLRSYVGRATPLYEAERLTAHYCRSDGGPRIWLKREDLNHTGAHKINNALGQALLALRMGKKRIIAETGAGQHGVATATVCARFGLECVVYMGAEDMRRQALNVFRMRLLGATVQPVTAGTATLKDATSEAIRDWVTNVETTHYILGSVAGPHPYPMLVRDFHAVIGQEARQQCAEAFGRLPDVLLACVGGGSNAMGLFHPFVQDRSVRMIGVEAAGDGVETGRHAATITEGRVGVLHGAMSLLLQDDEGQVQEAHSISAGLDYPGVGPEHSYLCEIGRAEYAAVSDQQALDALRLVSELEGIIPALETAHAFAWLETLCPTLAAGTEVVINCSGRGDKDVNTVAEKLGNQL.

Residue K129 is modified to N6-(pyridoxal phosphate)lysine.

Belongs to the TrpB family. As to quaternary structure, tetramer of two alpha and two beta chains. Requires pyridoxal 5'-phosphate as cofactor.

The catalysed reaction is (1S,2R)-1-C-(indol-3-yl)glycerol 3-phosphate + L-serine = D-glyceraldehyde 3-phosphate + L-tryptophan + H2O. It functions in the pathway amino-acid biosynthesis; L-tryptophan biosynthesis; L-tryptophan from chorismate: step 5/5. The beta subunit is responsible for the synthesis of L-tryptophan from indole and L-serine. The protein is Tryptophan synthase beta chain of Prochlorococcus marinus (strain MIT 9313).